A 519-amino-acid chain; its full sequence is Ion-translocating oxidoreductase complex subunit C (519 aa).

2 consecutive 4Fe-4S ferredoxin-type domains span residues 372-401 (ETPE…FELN) and 411-440 (GAAK…VQSF). Residues Cys381, Cys384, Cys387, Cys391, Cys420, Cys423, Cys426, and Cys430 each contribute to the [4Fe-4S] cluster site. Positions 494–519 (KAEEAAAAAAMPPPATATAIQGEATP) are disordered.

It belongs to the 4Fe4S bacterial-type ferredoxin family. RnfC subfamily. As to quaternary structure, the complex is composed of six subunits: RnfA, RnfB, RnfC, RnfD, RnfE and RnfG. The cofactor is [4Fe-4S] cluster.

It localises to the cellular chromatophore membrane. In terms of biological role, part of a membrane-bound complex that couples electron transfer with translocation of ions across the membrane. Required for nitrogen fixation. Involved in electron transfer to nitrogenase. This Rhodobacter capsulatus (Rhodopseudomonas capsulata) protein is Ion-translocating oxidoreductase complex subunit C.